We begin with the raw amino-acid sequence, 316 residues long: Nucleoprotein (316 aa).

Residues Tyr43, Tyr46, Val76, Arg122, and Lys240 each contribute to the RNA site.

It belongs to the tenuiviruses nucleocapsid protein family.

Its subcellular location is the virion. It localises to the host cytoplasm. Its function is as follows. Encapsidates the genome, protecting it from nucleases. The encapsidated genomic RNA is termed the nucleocapsid (NC), and serves as template for viral transcription and replication. The protein is Nucleoprotein of Maize stripe virus (MStV).